A 378-amino-acid polypeptide reads, in one-letter code: N-acetyldiaminopimelate deacetylase (378 aa).

Residue aspartate 72 is part of the active site. The active-site Proton acceptor is glutamate 131.

It belongs to the peptidase M20A family. N-acetyldiaminopimelate deacetylase subfamily.

It catalyses the reaction N-acetyl-(2S,6S)-2,6-diaminopimelate + H2O = (2S,6S)-2,6-diaminopimelate + acetate. It participates in amino-acid biosynthesis; L-lysine biosynthesis via DAP pathway; LL-2,6-diaminopimelate from (S)-tetrahydrodipicolinate (acetylase route): step 3/3. Functionally, catalyzes the conversion of N-acetyl-diaminopimelate to diaminopimelate and acetate. This is N-acetyldiaminopimelate deacetylase from Enterococcus faecalis (strain ATCC 700802 / V583).